Consider the following 101-residue polypeptide: Phosphoribosyl-AMP cyclohydrolase (101 aa).

Asp-71 serves as a coordination point for Mg(2+). Cys-72 serves as a coordination point for Zn(2+). Mg(2+) contacts are provided by Asp-73 and Asp-75. Zn(2+)-binding residues include Cys-88 and Cys-95.

Belongs to the PRA-CH family. In terms of assembly, homodimer. Mg(2+) is required as a cofactor. It depends on Zn(2+) as a cofactor.

The protein localises to the cytoplasm. It catalyses the reaction 1-(5-phospho-beta-D-ribosyl)-5'-AMP + H2O = 1-(5-phospho-beta-D-ribosyl)-5-[(5-phospho-beta-D-ribosylamino)methylideneamino]imidazole-4-carboxamide. Its pathway is amino-acid biosynthesis; L-histidine biosynthesis; L-histidine from 5-phospho-alpha-D-ribose 1-diphosphate: step 3/9. Functionally, catalyzes the hydrolysis of the adenine ring of phosphoribosyl-AMP. This Bacillus cytotoxicus (strain DSM 22905 / CIP 110041 / 391-98 / NVH 391-98) protein is Phosphoribosyl-AMP cyclohydrolase.